The following is a 95-amino-acid chain: Aspartyl/glutamyl-tRNA(Asn/Gln) amidotransferase subunit C (95 aa).

The protein belongs to the GatC family. Heterotrimer of A, B and C subunits.

It carries out the reaction L-glutamyl-tRNA(Gln) + L-glutamine + ATP + H2O = L-glutaminyl-tRNA(Gln) + L-glutamate + ADP + phosphate + H(+). It catalyses the reaction L-aspartyl-tRNA(Asn) + L-glutamine + ATP + H2O = L-asparaginyl-tRNA(Asn) + L-glutamate + ADP + phosphate + 2 H(+). Its function is as follows. Allows the formation of correctly charged Asn-tRNA(Asn) or Gln-tRNA(Gln) through the transamidation of misacylated Asp-tRNA(Asn) or Glu-tRNA(Gln) in organisms which lack either or both of asparaginyl-tRNA or glutaminyl-tRNA synthetases. The reaction takes place in the presence of glutamine and ATP through an activated phospho-Asp-tRNA(Asn) or phospho-Glu-tRNA(Gln). The sequence is that of Aspartyl/glutamyl-tRNA(Asn/Gln) amidotransferase subunit C from Pseudomonas putida (strain W619).